The primary structure comprises 196 residues: 3-isopropylmalate dehydratase small subunit (196 aa).

It belongs to the LeuD family. LeuD type 1 subfamily. Heterodimer of LeuC and LeuD.

The enzyme catalyses (2R,3S)-3-isopropylmalate = (2S)-2-isopropylmalate. It participates in amino-acid biosynthesis; L-leucine biosynthesis; L-leucine from 3-methyl-2-oxobutanoate: step 2/4. Catalyzes the isomerization between 2-isopropylmalate and 3-isopropylmalate, via the formation of 2-isopropylmaleate. The protein is 3-isopropylmalate dehydratase small subunit of Streptococcus thermophilus (strain CNRZ 1066).